The primary structure comprises 76 residues: MPQSSRYSDEHVEQLLSEMVNVLEKHHAPTDLALMVLGNMVTNLINTSIAPAQRQILARSFAEALQASIKKADKAH.

The protein belongs to the UPF0352 family.

In Pectobacterium atrosepticum (strain SCRI 1043 / ATCC BAA-672) (Erwinia carotovora subsp. atroseptica), this protein is UPF0352 protein ECA2748.